A 436-amino-acid polypeptide reads, in one-letter code: MSKPVIAIVGRPNVGKSTIFNRIAGERISIVEDTPGVTRDRIYTASEWLGHEFSLIDTGGIEISDAPFMEQIKQQAEIAIDEADVIIFLVSAREGVTDADERVAQILYRAEKPILLGVNKADNPEQRQDIFDFYSLGFGDPIPVSGAHGQGVGDLLDAAVAKFPTDLEEEDDDSIKFSLIGRPNVGKSSLVNAMLKEDRVIVSQIEGTTRDAIDTKFMAENNQEFTMIDTAGIRKRGKVYENTEKYAVMRALRAIDRSDVVLVVLNAEEGIREQDKKVAGYAHEAGRGIIIVVNKWDTLEKDNHTMKEFEDHIRNQFQYLDYAPIIFVSAKTGVRLQNLPAMIELVSENQNRRIQSALLNDVLMEATTVTPTPAINGKRLRIYYMTQVAVQPPTFVVFVNDINLLHFSYQRFLKNQLRKTFDFTGTPIHLIPRQRK.

EngA-type G domains follow at residues 4–167 and 175–351; these read PVIA…PTDL and IKFS…ENQN. GTP contacts are provided by residues 10–17, 57–61, 119–122, 181–188, 229–233, and 294–297; these read GRPNVGKS, DTGGI, NKAD, DTAGI, and NKWD. The region spanning 352-436 is the KH-like domain; it reads RRIQSALLND…PIHLIPRQRK (85 aa).

The protein belongs to the TRAFAC class TrmE-Era-EngA-EngB-Septin-like GTPase superfamily. EngA (Der) GTPase family. As to quaternary structure, associates with the 50S ribosomal subunit.

In terms of biological role, GTPase that plays an essential role in the late steps of ribosome biogenesis. The protein is GTPase Der of Latilactobacillus sakei subsp. sakei (strain 23K) (Lactobacillus sakei subsp. sakei).